Here is a 226-residue protein sequence, read N- to C-terminus: Putative methyltransferase RP459 (226 aa).

Belongs to the methyltransferase superfamily.

The chain is Putative methyltransferase RP459 from Rickettsia prowazekii (strain Madrid E).